The following is a 686-amino-acid chain: Tripartite terminase subunit 3 (686 aa).

The Walker A motif motif lies at 219-226 (IPRRHGKT). Positions 314–319 (LLYVDE) match the Walker B motif motif. The For ATPase activity role is filled by Glu-319. Catalysis depends on for nuclease activity residues Asp-475, Glu-548, and Asp-660.

Belongs to the herpesviridae TRM3 protein family. Interacts with the terminase subunits TRM1 and TRM2. Interacts with portal protein.

It is found in the host nucleus. Its function is as follows. Component of the molecular motor that translocates viral genomic DNA in empty capsid during DNA packaging. Forms a tripartite terminase complex together with TRM1 and TRM2 in the host cytoplasm. Once the complex reaches the host nucleus, it interacts with the capsid portal vertex. This portal forms a ring in which genomic DNA is translocated into the capsid. TRM3 carries an RNase H-like nuclease activity that plays an important role for the cleavage of concatemeric viral DNA into unit length genomes. The polypeptide is Tripartite terminase subunit 3 (Equine herpesvirus 2 (strain 86/87) (EHV-2)).